Consider the following 210-residue polypeptide: Thymidylate kinase (210 aa).

11–18 (GLEGAGKS) contacts ATP.

This sequence belongs to the thymidylate kinase family.

It carries out the reaction dTMP + ATP = dTDP + ADP. Its function is as follows. Phosphorylation of dTMP to form dTDP in both de novo and salvage pathways of dTTP synthesis. The sequence is that of Thymidylate kinase from Histophilus somni (strain 2336) (Haemophilus somnus).